Reading from the N-terminus, the 215-residue chain is Cytochrome b6 (215 aa).

The chain crosses the membrane as a helical span at residues 32 to 52 (IFYCLGGITLTCFLVQVATGF). Cys-35 provides a ligand contact to heme c. Heme b contacts are provided by His-86 and His-100. 3 consecutive transmembrane segments (helical) span residues 90 to 110 (ASMM…TGGF), 116 to 136 (LTWV…VTGY), and 186 to 206 (LHTF…FLMI). Heme b is bound by residues His-187 and His-202.

Belongs to the cytochrome b family. PetB subfamily. The 4 large subunits of the cytochrome b6-f complex are cytochrome b6, subunit IV (17 kDa polypeptide, PetD), cytochrome f and the Rieske protein, while the 4 small subunits are PetG, PetL, PetM and PetN. The complex functions as a dimer. Heme b serves as cofactor. Requires heme c as cofactor.

It localises to the plastid. Its subcellular location is the chloroplast thylakoid membrane. Component of the cytochrome b6-f complex, which mediates electron transfer between photosystem II (PSII) and photosystem I (PSI), cyclic electron flow around PSI, and state transitions. In Oenothera elata subsp. hookeri (Hooker's evening primrose), this protein is Cytochrome b6.